Reading from the N-terminus, the 461-residue chain is Probable metabolite transport protein CsbC (461 aa).

Topologically, residues 1–14 (MKKDTRKYMIYFFG) are cytoplasmic. A helical membrane pass occupies residues 15–35 (ALGGLLYGYDTGVISGALLFI). The Extracellular segment spans residues 36–38 (NND). The helical transmembrane segment at 39–59 (IPLTTLTEGLVVSMLLLGAIF) threads the bilayer. Topologically, residues 60-76 (GSALSGTCSDRWGRRKV) are cytoplasmic. A helical transmembrane segment spans residues 77–97 (VFVLSIIFIIGALACAFSQTI). The Extracellular portion of the chain corresponds to 98-104 (GMLIASR). Residues 105-125 (VILGLAVGGSTALVPVYLSEM) traverse the membrane as a helical segment. Over 126–139 (APTKIRGTLGTMNN) the chain is Cytoplasmic. The helical transmembrane segment at 140–160 (LMIVTGILLAYIVNYLFTPFE) threads the bilayer. Residues 161–163 (AWR) lie on the Extracellular side of the membrane. A helical transmembrane segment spans residues 164–184 (WMVGLAAVPAVLLLIGIAFMP). Residues 185–241 (ESPRWLVKRGSEEEARRIMNITHDPKDIEMELAEMKQGEAEKKETTLGVLKAKWIRP) lie on the Cytoplasmic side of the membrane. The chain crosses the membrane as a helical span at residues 242–262 (MLLIGVGLAIFQQAVGINTVI). At 263-280 (YYAPTIFTKAGLGTSASA) the chain is on the extracellular side. A helical membrane pass occupies residues 281 to 301 (LGTMGIGILNVIMCITAMILI). Topologically, residues 302–308 (DRVGRKK) are cytoplasmic. A helical transmembrane segment spans residues 309-329 (LLIWGSVGITLSLAALSGVLL). Topologically, residues 330–341 (TLGLSASTAWMT) are extracellular. A helical transmembrane segment spans residues 342–362 (VVFLGVYIVFYQATWGPVVWV). Residues 363–378 (LMPELFPSKARGAATG) are Cytoplasmic-facing. The chain crosses the membrane as a helical span at residues 379–399 (FTTLVLSAANLIVSLVFPLML). Over 400–402 (SAM) the chain is Extracellular. The chain crosses the membrane as a helical span at residues 403–423 (GIAWVFMVFSVICLLSFFFAF). Over 424–461 (YMVPETKGKSLEEIEASLKKRFKKKKSTQNQVLNERTL) the chain is Cytoplasmic.

Belongs to the major facilitator superfamily. Sugar transporter (TC 2.A.1.1) family.

It is found in the cell membrane. Could serve either a nutritional or an osmotic protection function. The polypeptide is Probable metabolite transport protein CsbC (csbC) (Bacillus subtilis (strain 168)).